A 197-amino-acid chain; its full sequence is TM2 domain-containing protein 1 (197 aa).

A signal peptide spans 1 to 32 (MAFRWRSLMRFRSTTRLLLLFTFCLTVIHSLG). The Extracellular portion of the chain corresponds to 33 to 105 (NDVDSCDKLH…GFNKTIPCRN (73 aa)). N-linked (GlcNAc...) asparagine glycosylation is found at N77, N84, N98, and N105. A helical membrane pass occupies residues 106–126 (VSGYSYKVAVALSLFLGWIGA). The TM2 domain maps to 108 to 155 (GYSYKVAVALSLFLGWIGADRFYLGYPALGLLKFCTVGFCGIGSLVDF). Residues 127–143 (DRFYLGYPALGLLKFCT) are Cytoplasmic-facing. A helical transmembrane segment spans residues 144–164 (VGFCGIGSLVDFMLISMQIVG). Topologically, residues 165–197 (PSDGSDYIVDYYGARLTRLSITNETYRRMQPSP) are extracellular. N187 carries an N-linked (GlcNAc...) asparagine glycan.

Belongs to the TM2 family.

The protein resides in the membrane. In Danio rerio (Zebrafish), this protein is TM2 domain-containing protein 1 (tm2d1).